The chain runs to 425 residues: CinA-like protein (425 aa).

This sequence belongs to the CinA family.

The protein is CinA-like protein of Mycobacterium marinum (strain ATCC BAA-535 / M).